A 103-amino-acid polypeptide reads, in one-letter code: Large ribosomal subunit protein bL21 (103 aa).

The protein belongs to the bacterial ribosomal protein bL21 family. As to quaternary structure, part of the 50S ribosomal subunit. Contacts protein L20.

Functionally, this protein binds to 23S rRNA in the presence of protein L20. The polypeptide is Large ribosomal subunit protein bL21 (Haemophilus influenzae (strain 86-028NP)).